The following is a 321-amino-acid chain: Fimbria adhesin protein (321 aa).

An N-terminal signal peptide occupies residues 1–18 (MKKLTLFIGLMALGTTSA).

This sequence belongs to the fimbrial protein family.

It localises to the fimbrium. The chain is Fimbria adhesin protein (mrkD) from Klebsiella pneumoniae.